The following is a 294-amino-acid chain: Elongation factor Ts (294 aa).

The involved in Mg(2+) ion dislocation from EF-Tu stretch occupies residues 80 to 83; the sequence is TDFV.

This sequence belongs to the EF-Ts family.

It is found in the cytoplasm. Associates with the EF-Tu.GDP complex and induces the exchange of GDP to GTP. It remains bound to the aminoacyl-tRNA.EF-Tu.GTP complex up to the GTP hydrolysis stage on the ribosome. In Polynucleobacter asymbioticus (strain DSM 18221 / CIP 109841 / QLW-P1DMWA-1) (Polynucleobacter necessarius subsp. asymbioticus), this protein is Elongation factor Ts.